The chain runs to 1493 residues: Protein RNA-directed DNA methylation 3 (1493 aa).

Disordered stretches follow at residues 1 to 34 and 54 to 96; these read MDRK…EGLR and GYYG…SSFV. The Nuclear localization signal signature appears at 21–28; that stretch reads KRKNSVEF. Residues 24-34 show a composition bias toward basic and acidic residues; it reads NSVEFRDEGLR. Residues 60-80 show a composition bias toward acidic residues; the sequence is SDEDDDGLGFLNDMEDEPEVE. Basic and acidic residues predominate over residues 81 to 92; sequence ESSKAGKGEKGK. One can recognise a KOW 1 domain in the interval 239 to 266; it reads KVSEGTWARVKNGKYKGDLAQIVAVSDT. The segment at 393–432 is disordered; it reads PTCREGGKGEGSGGGKGEGSGGGKGEGSRGGKGEGSSDFK. Over residues 401–417 the composition is skewed to gly residues; it reads GEGSGGGKGEGSGGGKG. The span at 418–432 shows a compositional bias: basic and acidic residues; that stretch reads EGSRGGKGEGSSDFK. Residues 501 to 528 form the KOW 2 domain; it reads QISVNDVVKISKGPSEGKQGVVRQVYRG. The tract at residues 578–602 is disordered; it reads SSPKSPLSPEKEWQPRERYNSSNQG. The span at 586-596 shows a compositional bias: basic and acidic residues; that stretch reads PEKEWQPRERY. A KOW 3 domain is found at 607–634; sequence TYSIGQKLRIRVGPLKGYLCRVIALRYS. 3 disordered regions span residues 692–711, 728–747, and 757–1493; these read IGAG…PSTD, EKNP…TVAD, and AAEN…KTGW. Repeat unit 1 spans residues 732–741; sequence WGGSKPTSDV. A 42 X 9 AA approximate WG/GW-rich tandem repeats region spans residues 732 to 1493; it reads WGGSKPTSDV…WGTGDKKTGW (762 aa). The segment covering 757-767 has biased composition (low complexity); it reads AAENKPASASD. 37 repeat units span residues 775–784, 789–797, 818–827, 836–845, 854–863, 866–875, 883–892, 917–926, 935–943, 944–953, 954–962, 963–972, 978–987, 1003–1012, 1013–1022, 1023–1032, 1033–1042, 1043–1052, 1053–1062, 1063–1072, 1073–1082, 1132–1141, 1144–1153, 1156–1165, 1167–1176, 1180–1189, 1192–1201, 1204–1213, 1217–1226, 1229–1238, 1241–1250, 1253–1262, 1266–1275, 1278–1287, 1290–1299, 1302–1311, and 1314–1323. A compositionally biased stretch (polar residues) spans 790 to 812; sequence GDTSASNVEASSWEKQGASTSNV. Residues 846-860 show a composition bias toward basic and acidic residues; the sequence is SQKKEESSWGKKGGS. Polar residues predominate over residues 866–875; it reads WGNKDGNSSA. Over residues 955–1090 the composition is skewed to basic and acidic residues; sequence GKKDDGGSWG…YSEQTFDRGG (136 aa). Residues 1122-1134 show a composition bias toward low complexity; it reads PWSKPSGGSSWGK. The span at 1156–1172 shows a compositional bias: polar residues; it reads WGKQDNGVGSSWGKQND. A compositionally biased stretch (gly residues) spans 1186–1213; that stretch reads AGGGSSWGKQDSGGDGSSWGKQDGGGDS. The span at 1218–1231 shows a compositional bias: polar residues; that stretch reads GKQNNTSGGSSWGK. The segment covering 1235-1264 has biased composition (gly residues); it reads AGGGSSWGKQDGGGGGSSWGKQDGGGGSGS. Over residues 1270-1283 the composition is skewed to polar residues; it reads NETSNGSSWGKQND. Residues 1284-1321 are compositionally biased toward gly residues; it reads SGGGSSWGKQDGGGGGSSWGKQNDGGGGSSWGKQGDGG. 2 stretches are compositionally biased toward polar residues: residues 1366 to 1382 and 1392 to 1401; these read WKTD…QSGG and DSNNSKPSGS. Repeat 39 spans residues 1389-1398; sequence WGEDSNNSKP. Residues 1416–1430 are compositionally biased toward basic and acidic residues; sequence NSKKETNDKPGDDSK. A compositionally biased stretch (polar residues) spans 1432-1442; that stretch reads AWGTSNDQVNT. 3 tandem repeats follow at residues 1433 to 1442, 1467 to 1475, and 1484 to 1493.

As to quaternary structure, interacts with AGO4 via its C-terminal region and with RNA transcripts. Binds chromatin at loci subject to transcriptional silencing downstream of RNA Polymerase V, but independently from the presence of 24-nt siRNA.

The protein localises to the nucleus. Its subcellular location is the nucleoplasm. In terms of biological role, effector of RNA-directed DNA methylation (RdDM) triggered by small interfering RNAs (siRNAs, 24-nt RNAs). Functions as an adapter protein that binds scaffold transcripts generated by polymerase V and recruits AGO4 and AGO4-bound siRNAs to form an RdDM effector complex. Promotes the expression of 24-nt RNAs. Required for the initial establishment of DNA methylation. Together with AGO4, required for transcriptional gene silencing (TGS) by DNA methylation and repressive histone modifications (H3K9me2) of several chromatin loci. The polypeptide is Protein RNA-directed DNA methylation 3 (Arabidopsis thaliana (Mouse-ear cress)).